A 388-amino-acid polypeptide reads, in one-letter code: Succinate--CoA ligase [ADP-forming] subunit beta (388 aa).

Positions 9 to 244 (KEIFARYGLP…PTQESELEVK (236 aa)) constitute an ATP-grasp domain. ATP contacts are provided by residues lysine 46, 53 to 55 (GRG), glutamate 99, threonine 102, and glutamate 107. Residues asparagine 199 and aspartate 213 each contribute to the Mg(2+) site. Substrate contacts are provided by residues asparagine 264 and 321 to 323 (GIL).

It belongs to the succinate/malate CoA ligase beta subunit family. In terms of assembly, heterotetramer of two alpha and two beta subunits. The cofactor is Mg(2+).

It carries out the reaction succinate + ATP + CoA = succinyl-CoA + ADP + phosphate. The catalysed reaction is GTP + succinate + CoA = succinyl-CoA + GDP + phosphate. The protein operates within carbohydrate metabolism; tricarboxylic acid cycle; succinate from succinyl-CoA (ligase route): step 1/1. Functionally, succinyl-CoA synthetase functions in the citric acid cycle (TCA), coupling the hydrolysis of succinyl-CoA to the synthesis of either ATP or GTP and thus represents the only step of substrate-level phosphorylation in the TCA. The beta subunit provides nucleotide specificity of the enzyme and binds the substrate succinate, while the binding sites for coenzyme A and phosphate are found in the alpha subunit. The protein is Succinate--CoA ligase [ADP-forming] subunit beta of Persephonella marina (strain DSM 14350 / EX-H1).